The primary structure comprises 113 residues: Small ribosomal subunit protein bS16 (113 aa).

Residues 84–113 are disordered; the sequence is PKPAYTEQPKKSAPKKRAQERAAAAAAAAA.

It belongs to the bacterial ribosomal protein bS16 family.

The protein is Small ribosomal subunit protein bS16 of Gluconacetobacter diazotrophicus (strain ATCC 49037 / DSM 5601 / CCUG 37298 / CIP 103539 / LMG 7603 / PAl5).